The following is a 386-amino-acid chain: Cytochrome b (386 aa).

4 helical membrane-spanning segments follow: residues 32-52 (FGSLLALCLGIQIVTGVTLAM), 76-98 (WMIRYLHANTASFFFLFVYLHIG), 113-133 (PWSIGVIILILMMATAFLGYV), and 179-199 (FFSLHYLLPFILAALAVMHLL). Positions 82 and 96 each coordinate heme b. Positions 183 and 197 each coordinate heme b. H202 provides a ligand contact to a ubiquinone. 4 consecutive transmembrane segments (helical) span residues 225–245 (YTFKDLVTIFLFFLVLALFLF), 289–309 (LGGVIAMFGSLLILLAMPLLD), 321–341 (LMKFFFWLLVVDFLILLWCGS), and 348–368 (FITLGQFATTFYFSWFLIIVP).

This sequence belongs to the cytochrome b family. Fungal cytochrome b-c1 complex contains 10 subunits; 3 respiratory subunits, 2 core proteins and 5 low-molecular weight proteins. Cytochrome b-c1 complex is a homodimer. The cofactor is heme b.

The protein resides in the mitochondrion inner membrane. In terms of biological role, component of the ubiquinol-cytochrome c reductase complex (complex III or cytochrome b-c1 complex) that is part of the mitochondrial respiratory chain. The b-c1 complex mediates electron transfer from ubiquinol to cytochrome c. Contributes to the generation of a proton gradient across the mitochondrial membrane that is then used for ATP synthesis. The chain is Cytochrome b (cob) from Rhizopus oryzae (Mucormycosis agent).